Consider the following 128-residue polypeptide: ACDVSIEGNDSMQFNTKSIVVDKTCKEFTINLKHTGKLPKAAMGHNVVVSKKSDESAVATDGMKAGLNNDYVKAGDERVIAHTSVIGGGETDSVTFDVSKLKEGEDYAFFCSFPGHWSIMKGTIELGS.

The 128-residue stretch at 1–128 folds into the Plastocyanin-like domain; it reads ACDVSIEGND…IMKGTIELGS (128 aa). Cysteines 2 and 25 form a disulfide. Histidine 45, cysteine 111, histidine 116, and methionine 120 together coordinate Cu cation.

In terms of assembly, monomer. Interacts with the AAUA/AAUB heterotetramer complex. The cofactor is Cu cation.

It localises to the periplasm. In terms of biological role, transfers electrons from cytochrome c551 to cytochrome oxidase. Transfers electrons from the tryptophan tryptophylquinone of the aromatic amine dehydrogenase heterotetramer. The chain is Azurin from Alcaligenes faecalis.